The primary structure comprises 343 residues: CRISPR-associated endonuclease Cas1 1 (343 aa).

Mn(2+) is bound by residues E166, H234, and E249.

The protein belongs to the CRISPR-associated endonuclease Cas1 family. As to quaternary structure, homodimer, forms a heterotetramer with a Cas2 homodimer. Mg(2+) serves as cofactor. Requires Mn(2+) as cofactor.

Its function is as follows. CRISPR (clustered regularly interspaced short palindromic repeat), is an adaptive immune system that provides protection against mobile genetic elements (viruses, transposable elements and conjugative plasmids). CRISPR clusters contain spacers, sequences complementary to antecedent mobile elements, and target invading nucleic acids. CRISPR clusters are transcribed and processed into CRISPR RNA (crRNA). Acts as a dsDNA endonuclease. Involved in the integration of spacer DNA into the CRISPR cassette. This is CRISPR-associated endonuclease Cas1 1 from Chlorobaculum tepidum (strain ATCC 49652 / DSM 12025 / NBRC 103806 / TLS) (Chlorobium tepidum).